Consider the following 341-residue polypeptide: Ribosomal RNA small subunit methyltransferase H (341 aa).

S-adenosyl-L-methionine is bound by residues 47–49 (GGY), aspartate 64, phenylalanine 91, aspartate 109, and glutamine 116.

The protein belongs to the methyltransferase superfamily. RsmH family.

It is found in the cytoplasm. It catalyses the reaction cytidine(1402) in 16S rRNA + S-adenosyl-L-methionine = N(4)-methylcytidine(1402) in 16S rRNA + S-adenosyl-L-homocysteine + H(+). In terms of biological role, specifically methylates the N4 position of cytidine in position 1402 (C1402) of 16S rRNA. The polypeptide is Ribosomal RNA small subunit methyltransferase H (Sinorhizobium medicae (strain WSM419) (Ensifer medicae)).